Here is a 79-residue protein sequence, read N- to C-terminus: Serine protease inhibitor Kazal-type 1-like (79 aa).

Positions 1 to 23 (MKVAIIFLLSALALLNLAGNTTA) are cleaved as a signal peptide. The Kazal-like domain occupies 26–79 (IGKKANCPNTLVGCPRDYDPVCGTDGKTYANECILCFENRKFGTSIRIQRRGLC). Intrachain disulfides connect C32–C61, C39–C58, and C47–C79.

As to expression, seminal vesicle.

Its subcellular location is the secreted. In terms of biological role, serine protease inhibitor which exhibits anti-trypsin activity. In the pancreas, protects against trypsin-catalyzed premature activation of zymogens. Its function is as follows. In the male reproductive tract, binds to sperm heads where it modulates sperm capacitance by inhibiting calcium uptake and nitrogen oxide (NO) production. The chain is Serine protease inhibitor Kazal-type 1-like from Rattus norvegicus (Rat).